A 387-amino-acid chain; its full sequence is 3-ketoacyl-CoA thiolase (387 aa).

C91 functions as the Acyl-thioester intermediate in the catalytic mechanism. Catalysis depends on proton acceptor residues H343 and C373.

It belongs to the thiolase-like superfamily. Thiolase family. As to quaternary structure, heterotetramer of two alpha chains (FadB) and two beta chains (FadA).

Its subcellular location is the cytoplasm. It carries out the reaction an acyl-CoA + acetyl-CoA = a 3-oxoacyl-CoA + CoA. Its pathway is lipid metabolism; fatty acid beta-oxidation. Functionally, catalyzes the final step of fatty acid oxidation in which acetyl-CoA is released and the CoA ester of a fatty acid two carbons shorter is formed. The chain is 3-ketoacyl-CoA thiolase from Shewanella sp. (strain W3-18-1).